Consider the following 255-residue polypeptide: Trans-aconitate 2-methyltransferase (255 aa).

Belongs to the methyltransferase superfamily. Tam family.

It localises to the cytoplasm. The enzyme catalyses trans-aconitate + S-adenosyl-L-methionine = (E)-3-(methoxycarbonyl)pent-2-enedioate + S-adenosyl-L-homocysteine. In terms of biological role, catalyzes the S-adenosylmethionine monomethyl esterification of trans-aconitate. In Mycolicibacterium gilvum (strain PYR-GCK) (Mycobacterium gilvum (strain PYR-GCK)), this protein is Trans-aconitate 2-methyltransferase.